Reading from the N-terminus, the 262-residue chain is Adenosylcobinamide-GDP ribazoletransferase (262 aa).

6 consecutive transmembrane segments (helical) span residues 11 to 31, 43 to 63, 66 to 86, 121 to 141, 146 to 166, and 199 to 219; these read LNLFFVATGFFTRLPTPSWVI, YFGLVGLLIGLICALVYWFTQ, LPTSVAVLLAMVAGVLVTGGF, AIVLALILLLRWQLLVELALF, AITGFIVAHTLSRVLAASLIF, and IFVLFWLNGLAAFVLFISLWA.

Belongs to the CobS family. Mg(2+) serves as cofactor.

Its subcellular location is the cell inner membrane. The enzyme catalyses alpha-ribazole + adenosylcob(III)inamide-GDP = adenosylcob(III)alamin + GMP + H(+). It catalyses the reaction alpha-ribazole 5'-phosphate + adenosylcob(III)inamide-GDP = adenosylcob(III)alamin 5'-phosphate + GMP + H(+). Its pathway is cofactor biosynthesis; adenosylcobalamin biosynthesis; adenosylcobalamin from cob(II)yrinate a,c-diamide: step 7/7. Functionally, joins adenosylcobinamide-GDP and alpha-ribazole to generate adenosylcobalamin (Ado-cobalamin). Also synthesizes adenosylcobalamin 5'-phosphate from adenosylcobinamide-GDP and alpha-ribazole 5'-phosphate. The sequence is that of Adenosylcobinamide-GDP ribazoletransferase from Shewanella denitrificans (strain OS217 / ATCC BAA-1090 / DSM 15013).